Reading from the N-terminus, the 395-residue chain is MFRLLTACWSRQKATEGKQRNVTIIVIGLDNSGKSHLVAAFQRLIPSKMHSEMRPTQTTLLLDDYQVSVYDLTGDLKGREKWPNYYAEAHGLVFVVDSSDIARIQEVKIILTRLMFDKRVSGKPILILANKQDKKDALLPCDIIEYLLLERLVNETKSMCRVEPCSTIRNLPKRHQQPIVIGLRWLLAAIGDRYDELCTRHQTPSMSNISSSKNIRGCGERCSSDSLSTRGVGVVRNNHRQHFEKRQHLEHRQHVEQRHFEKRQHFESRQHLIQRSLDARPLKPILQKDGFRIRPKKNMSVTFALDVIMEEGECSRKIGAPNISKPCNSQCYDTKTPAPSADANLFKARRPKKRIETWDTEEMFLEDPRGEAFRSCVTGHSSRSSRNTQSLYFTG.

Residues 28 to 35 (GLDNSGKS), 71 to 75 (DLTGD), and 130 to 133 (NKQD) contribute to the GTP site.

It belongs to the small GTPase superfamily. Arf family.

This is ADP-ribosylation factor-like protein 13A (Arl13a) from Rattus norvegicus (Rat).